A 522-amino-acid chain; its full sequence is MTTITEELIARLKQGIISGVDLQPRQVNVGTVIAVGDGVARLSGLDQVVASEIVEFPPKAGRNESIYGIALNLEQDSVAAIILGDDESIEEGDLVTSTGRVISVPVGQGLLGRVVNPLGQPIDGKGPIQYEKMRPIERIAPGVITRKSVDTPVQTGIIAIDALIPIGRGQRELIIGDRQTGKTAVAIDTIINQKGQGMVCIYVAIGQRRAQVAQVVGTLEKYGAMEYTIVVSATASESAALQYIAPYAGCAMGEEIMENGVMLNGQLVKDALIVYDDLSKHAVAYRQVSLLLRRPPGREAYPGDVFYLHSRLLERAARLNEEYGGGSLTALPVIETQANDVSAYIPTNVISITDGQIYLEADLFNAGQRPALNVGISVSRVGSAAQTRAMRAVAGKLKGELAQFRDLAAFAQFASDLDATTKAQIERGQRLQELLKQPQFQPLAVEDQVAVLYAATNNYLDDVPVAMITKWRDDFLAFLRTAHPEVRKLIYDNRLDRKFPTPEVKEALEAAIKEFKATSNYS.

176-183 is a binding site for ATP; that stretch reads GDRQTGKT.

It belongs to the ATPase alpha/beta chains family. In terms of assembly, F-type ATPases have 2 components, CF(1) - the catalytic core - and CF(0) - the membrane proton channel. CF(1) has five subunits: alpha(3), beta(3), gamma(1), delta(1), epsilon(1). CF(0) has four main subunits: a, b, b' and c.

The protein resides in the cell membrane. It catalyses the reaction ATP + H2O + 4 H(+)(in) = ADP + phosphate + 5 H(+)(out). Produces ATP from ADP in the presence of a proton gradient across the membrane. The alpha chain is a regulatory subunit. This is ATP synthase subunit alpha from Chloroflexus aggregans (strain MD-66 / DSM 9485).